The sequence spans 105 residues: Large ribosomal subunit protein uL24 (105 aa).

The protein belongs to the universal ribosomal protein uL24 family. In terms of assembly, part of the 50S ribosomal subunit.

Functionally, one of two assembly initiator proteins, it binds directly to the 5'-end of the 23S rRNA, where it nucleates assembly of the 50S subunit. One of the proteins that surrounds the polypeptide exit tunnel on the outside of the subunit. This chain is Large ribosomal subunit protein uL24, found in Xanthobacter autotrophicus (strain ATCC BAA-1158 / Py2).